The sequence spans 315 residues: Ribosomal RNA small subunit methyltransferase H (315 aa).

S-adenosyl-L-methionine contacts are provided by residues 35–37 (AGH), D55, F84, D105, and Q112.

This sequence belongs to the methyltransferase superfamily. RsmH family.

It localises to the cytoplasm. The enzyme catalyses cytidine(1402) in 16S rRNA + S-adenosyl-L-methionine = N(4)-methylcytidine(1402) in 16S rRNA + S-adenosyl-L-homocysteine + H(+). In terms of biological role, specifically methylates the N4 position of cytidine in position 1402 (C1402) of 16S rRNA. The chain is Ribosomal RNA small subunit methyltransferase H from Streptococcus agalactiae serotype III (strain NEM316).